The following is a 559-amino-acid chain: Protochlorophyllide-dependent translocon component 52, chloroplastic (559 aa).

The N-terminal 55 residues, Met1–Ser55, are a transit peptide targeting the chloroplast. A disordered region spans residues Ser44 to Ala70. The segment covering Thr47–Ser64 has biased composition (low complexity). The region spanning Trp85–Phe195 is the Rieske domain. Residues Cys127, His129, Cys147, and His150 each contribute to the [2Fe-2S] cluster site. The Fe cation site is built by His248 and His253. The Redox-active motif motif lies at Cys483–Cys486. Transmembrane regions (helical) follow at residues Leu493–Val513 and Ile525–Ile545.

The cofactor is [2Fe-2S] cluster.

Its subcellular location is the plastid. The protein resides in the chloroplast inner membrane. It carries out the reaction protochlorophyllide a + 4 reduced [2Fe-2S]-[ferredoxin] + 2 O2 + 5 H(+) = protochlorophyllide b + 4 oxidized [2Fe-2S]-[ferredoxin] + 3 H2O. Its activity is regulated as follows. Down-regulated by light. Functionally, part of a translocon most abundantly expressed in etiolated plants and involved in the protochlorophyllide-dependent import of the precursor NADPH:protochlorophyllide oxidoreductase A (pPORA). The polypeptide is Protochlorophyllide-dependent translocon component 52, chloroplastic (Arabidopsis thaliana (Mouse-ear cress)).